An 85-amino-acid chain; its full sequence is Large ribosomal subunit protein bL27 (85 aa).

The tract at residues 1–26 (MAHKKAGGSTRNGRDSESKRLGVKRF) is disordered.

This sequence belongs to the bacterial ribosomal protein bL27 family.

This Saccharophagus degradans (strain 2-40 / ATCC 43961 / DSM 17024) protein is Large ribosomal subunit protein bL27.